We begin with the raw amino-acid sequence, 82 residues long: RNA-binding protein Hfq (82 aa).

Residues 11-71 enclose the Sm domain; the sequence is DTFLNSVRKS…ISTIMPAQPV (61 aa).

This sequence belongs to the Hfq family. In terms of assembly, homohexamer.

In terms of biological role, RNA chaperone that binds small regulatory RNA (sRNAs) and mRNAs to facilitate mRNA translational regulation in response to envelope stress, environmental stress and changes in metabolite concentrations. Also binds with high specificity to tRNAs. This is RNA-binding protein Hfq from Caulobacter sp. (strain K31).